The primary structure comprises 162 residues: MWQLLLPLALGLGTMGLGRAELTTAQHRGLQVALEEFHKHPPVLWAFQVTSVDNAADTLFPAGQFVRLEFKLQQTSCRKKDWRKEDCKVKPNGRKRKCLACIKLDSKDQVLGRMVHCPIQTQVQRELDDAQDAQCSRVERAGEDPHSYYLPGQFAFIKALSP.

The N-terminal stretch at 1-20 is a signal peptide; it reads MWQLLLPLALGLGTMGLGRA. 3 cysteine pairs are disulfide-bonded: Cys77/Cys87, Cys98/Cys117, and Cys101/Cys135. The propeptide occupies 156-162; that stretch reads FIKALSP.

In terms of processing, secreted in an inactive precursor form, prochemerin, which is proteolytically processed by a variety of extracellular proteases to generate forms with differing levels of bioactivity. For example, the removal of five amino acids results in chemerin-157, which exhibits the highest activity, while removal of six amino acids results in chemerin-156 which has slightly less activity. Some proteases are able to cleave at more than one site and chemerin forms may be sequentially processed by different enzymes to modulate activity levels. The coordinated expression and activity of chemerin-modifying enzymes is essential for regulating its bioactivation, inactivation and, consequently, biological function. Cathepsin G cleaves six C-terminal amino acids from prochemerin (chemerin-156), elastase is able to cleave five (chemerin-157), seven (chemerin-155) or ten (chemerin-152), plasmin cleaves four amino acids (chemerin-158), and tryptase cleaves four (chemerin-158) or seven (chemerin-155). Multiple cleavages might be required to fully activate chemerin, with an initial tryptase cleavage resulting in chemerin with low activity (chemerin-158), and a second cleavage by carboxypeptidase N or B producing highly active chemerin (chemerin-157).

The protein localises to the secreted. Adipocyte-secreted protein (adipokine) that regulates adipogenesis, metabolism and inflammation through activation of the chemokine-like receptor 1 (CMKLR1). Also acts as a ligand for CMKLR2. Can also bind to C-C chemokine receptor-like 2 (CCRL2), but with a lower affinity than it does to CMKLR1 or CMKLR2. Positively regulates adipocyte differentiation, modulates the expression of adipocyte genes involved in lipid and glucose metabolism and might play a role in angiogenesis, a process essential for the expansion of white adipose tissue. Also acts as a pro-inflammatory adipokine, causing an increase in secretion of pro-inflammatory and prodiabetic adipokines, which further impair adipose tissue metabolic function and have negative systemic effects including impaired insulin sensitivity, altered glucose and lipid metabolism, and a decrease in vascular function in other tissues. Can have both pro- and anti-inflammatory properties depending on the modality of enzymatic cleavage by different classes of proteases. Acts as a chemotactic factor for leukocyte populations expressing CMKLR1, particularly immature plasmacytoid dendritic cells, but also immature myeloid DCs, macrophages and natural killer cells. Exerts an anti-inflammatory role by preventing TNF/TNFA-induced VCAM1 expression and monocytes adhesion in vascular endothelial cells. The effect is mediated via inhibiting activation of NF-kappa-B and CRK/p38 through stimulation of AKT1/NOS3 signaling and nitric oxide production. Exhibits an antimicrobial function in the skin. In Bos taurus (Bovine), this protein is Retinoic acid receptor responder protein 2 (RARRES2).